The chain runs to 423 residues: Lipid droplet-regulating VLDL assembly factor AUP1 (423 aa).

The Cytoplasmic portion of the chain corresponds to 1 to 19 (METRGIEQMFDFQRLPNDR). Residues 20–40 (FILLLLLLYAPVGFCLMLLRI) lie within the membrane without spanning it. Residues 41-423 (FIGVHVFLVS…KHGLNKEDDL (383 aa)) lie on the Cytoplasmic side of the membrane. Residues 304 to 346 (RIARLAQQVKEVLPDVPVSVITRDLLQTNCVDTTITNLLERTD) enclose the CUE domain. Residues 355-392 (TMPSGPGKAAASSTPSAMVSSPNLKPAAKSFGRSPIDR) form a disordered region. A compositionally biased stretch (polar residues) spans 365–377 (ASSTPSAMVSSPN).

The protein belongs to the AUP1 family.

Its subcellular location is the endoplasmic reticulum membrane. It is found in the lipid droplet. Functionally, plays a role in the translocation of terminally misfolded proteins from the endoplasmic reticulum lumen to the cytoplasm and their degradation by the proteasome. Plays a role in lipid droplet formation. Induces lipid droplet clustering. This is Lipid droplet-regulating VLDL assembly factor AUP1 from Danio rerio (Zebrafish).